Here is a 208-residue protein sequence, read N- to C-terminus: Proheparin-binding EGF-like growth factor (208 aa).

Residues 1 to 23 form the signal peptide; it reads MKLLPSVVLKLFLAAVFSALVTG. The propeptide occupies 24-62; it reads ESLERLRRGLADGTSNLVSPTESTDQLLPPGGGRGREVL. The Extracellular segment spans residues 24–161; that stretch reads ESLERLRRGL…NRLYTYDHTT (138 aa). The span at 37 to 49 shows a compositional bias: polar residues; it reads TSNLVSPTESTDQ. Disordered regions lie at residues 37 to 57 and 81 to 104; these read TSNL…GGGR and QALA…LGKK. O-linked (GalNAc...) threonine glycosylation occurs at Thr85. Positions 93 to 102 are enriched in basic residues; it reads KRKKKGKGLG. Residues 104–144 form the EGF-like domain; that stretch reads KRDPCLRKYKDFCIHGECKYVKELRAPSCICHPGYHGERCH. Intrachain disulfides connect Cys108–Cys121, Cys116–Cys132, and Cys134–Cys143. Positions 149 to 208 are cleaved as a propeptide — C-terminal; that stretch reads PVKNRLYTYDHTTILAVVAVVLSSVCLLVIVGLLMFRYHRRGGYDVENEEKVKLGVTASH. Residues 162-182 traverse the membrane as a helical segment; it reads ILAVVAVVLSSVCLLVIVGLL. The Cytoplasmic portion of the chain corresponds to 183–208; that stretch reads MFRYHRRGGYDVENEEKVKLGVTASH.

As to quaternary structure, interacts with FBLN1. Interacts with EGFR and ERBB4. O-glycosylated. In terms of tissue distribution, macrophages, midbrain, cerebellum, hypothalamus, cerebral cortex, bulbourethral gland, lung, heart ventricle, kidney, skin, prostate, seminal vesicle, testis; at low levels in lymph node, thymus, spleen; not detected in pituitary, olfactory bulb, thyroid, duodenum, pancreas, liver, submaxillary gland.

The protein localises to the secreted. Its subcellular location is the extracellular space. It localises to the cell membrane. Growth factor that mediates its effects via EGFR, ERBB2 and ERBB4. Required for normal cardiac valve formation and normal heart function. Promotes smooth muscle cell proliferation. May be involved in macrophage-mediated cellular proliferation. It is mitogenic for fibroblasts, but not endothelial cells. It is able to bind EGF receptor/EGFR with higher affinity than EGF itself and is a far more potent mitogen for smooth muscle cells than EGF. Also acts as a diphtheria toxin receptor. The polypeptide is Proheparin-binding EGF-like growth factor (HBEGF) (Sus scrofa (Pig)).